The primary structure comprises 115 residues: Large ribosomal subunit protein bL19 (115 aa).

The protein belongs to the bacterial ribosomal protein bL19 family.

In terms of biological role, this protein is located at the 30S-50S ribosomal subunit interface and may play a role in the structure and function of the aminoacyl-tRNA binding site. This is Large ribosomal subunit protein bL19 from Caldanaerobacter subterraneus subsp. tengcongensis (strain DSM 15242 / JCM 11007 / NBRC 100824 / MB4) (Thermoanaerobacter tengcongensis).